Consider the following 634-residue polypeptide: Transcription termination factor FttA (634 aa).

Residues glutamate 4–leucine 69 form a KHa region. The interval valine 70–proline 137 is KHb. A metallo-beta-lactamase N-terminus region spans residues tryptophan 179–tyrosine 381. Zn(2+) is bound by residues histidine 240, histidine 242, aspartate 244, histidine 245, histidine 327, and aspartate 350. A beta-Casp region spans residues aspartate 382 to serine 575. Residues glycine 576 to lysine 634 are metallo-beta-lactamase C-terminus. Histidine 601 contacts Zn(2+).

It belongs to the metallo-beta-lactamase superfamily. RNA-metabolizing metallo-beta-lactamase-like family. FttA subfamily. Homodimer. Interacts with RNA polymerase (RNAP), interacts with the Spt4-Spt5 complex. Requires Zn(2+) as cofactor.

Optimal NaCl concentration is 100 mM for nuclease activity on RNA. Terminates transcription on the whole genome. Termination is linked to FttA-mediated RNA cleavage and does not require NTP hydrolysis. Cleaves endonucleolytically at the RNA exit channel of RNA polymerase (RNAP); the 5'-3' exonuclease activity of this protein degrades the nascent RNA released from RNAP. Functionally, an endoribonuclease with no apparent exonuclease activity, has low activity on single-stranded DNA (endodeoxyribonuclease, endoDNase). The polypeptide is Transcription termination factor FttA (Methanocaldococcus jannaschii (strain ATCC 43067 / DSM 2661 / JAL-1 / JCM 10045 / NBRC 100440) (Methanococcus jannaschii)).